The following is a 115-amino-acid chain: NADH-ubiquinone oxidoreductase chain 3 (115 aa).

Helical transmembrane passes span 4–24, 55–75, and 84–104; these read MLAM…AFWL, FFLV…LLPL, and MITT…GLSY.

This sequence belongs to the complex I subunit 3 family. As to quaternary structure, core subunit of respiratory chain NADH dehydrogenase (Complex I) which is composed of 45 different subunits. Interacts with TMEM186. Interacts with TMEM242.

It is found in the mitochondrion inner membrane. The catalysed reaction is a ubiquinone + NADH + 5 H(+)(in) = a ubiquinol + NAD(+) + 4 H(+)(out). In terms of biological role, core subunit of the mitochondrial membrane respiratory chain NADH dehydrogenase (Complex I) which catalyzes electron transfer from NADH through the respiratory chain, using ubiquinone as an electron acceptor. Essential for the catalytic activity of complex I. This is NADH-ubiquinone oxidoreductase chain 3 from Reithrodon auritus (Bunny rat).